A 449-amino-acid polypeptide reads, in one-letter code: Tryptophan synthase beta chain 2 (449 aa).

The residue at position 116 (K116) is an N6-(pyridoxal phosphate)lysine.

The protein belongs to the TrpB family. Tetramer of two alpha and two beta chains. The cofactor is pyridoxal 5'-phosphate.

It catalyses the reaction (1S,2R)-1-C-(indol-3-yl)glycerol 3-phosphate + L-serine = D-glyceraldehyde 3-phosphate + L-tryptophan + H2O. The protein operates within amino-acid biosynthesis; L-tryptophan biosynthesis; L-tryptophan from chorismate: step 5/5. The beta subunit is responsible for the synthesis of L-tryptophan from indole and L-serine. The sequence is that of Tryptophan synthase beta chain 2 (trpB2) from Aeropyrum pernix (strain ATCC 700893 / DSM 11879 / JCM 9820 / NBRC 100138 / K1).